A 361-amino-acid chain; its full sequence is Histidinol-phosphate aminotransferase (361 aa).

Residues 26–45 (GMDPEDLTKLSSNENPHGPS) form a disordered region. Residue lysine 222 is modified to N6-(pyridoxal phosphate)lysine.

This sequence belongs to the class-II pyridoxal-phosphate-dependent aminotransferase family. Histidinol-phosphate aminotransferase subfamily. Pyridoxal 5'-phosphate is required as a cofactor.

It catalyses the reaction L-histidinol phosphate + 2-oxoglutarate = 3-(imidazol-4-yl)-2-oxopropyl phosphate + L-glutamate. The protein operates within amino-acid biosynthesis; L-histidine biosynthesis; L-histidine from 5-phospho-alpha-D-ribose 1-diphosphate: step 7/9. This Haloferax volcanii (strain ATCC 29605 / DSM 3757 / JCM 8879 / NBRC 14742 / NCIMB 2012 / VKM B-1768 / DS2) (Halobacterium volcanii) protein is Histidinol-phosphate aminotransferase (hisC).